A 352-amino-acid chain; its full sequence is PhoH-like protein (352 aa).

Residues 1–21 (MTSRETRAADAAGARQADAQV) are disordered. The span at 9 to 20 (ADAAGARQADAQ) shows a compositional bias: low complexity. Residue 150-157 (GPAGTGKT) participates in ATP binding.

It belongs to the PhoH family.

The protein localises to the cytoplasm. The chain is PhoH-like protein from Mycobacterium bovis (strain ATCC BAA-935 / AF2122/97).